Here is a 517-residue protein sequence, read N- to C-terminus: Glutamate--cysteine ligase (517 aa).

Belongs to the glutamate--cysteine ligase type 1 family. Type 1 subfamily.

The enzyme catalyses L-cysteine + L-glutamate + ATP = gamma-L-glutamyl-L-cysteine + ADP + phosphate + H(+). Its pathway is sulfur metabolism; glutathione biosynthesis; glutathione from L-cysteine and L-glutamate: step 1/2. This chain is Glutamate--cysteine ligase, found in Pectobacterium atrosepticum (strain SCRI 1043 / ATCC BAA-672) (Erwinia carotovora subsp. atroseptica).